A 503-amino-acid polypeptide reads, in one-letter code: uncharacterized protein (503 aa).

Disordered regions lie at residues 1–26 and 132–156; these read MADD…SPTT and DQQQ…DNSM. Positions 16-26 are enriched in low complexity; the sequence is AQSSVPTSPTT. Residues 147-156 are compositionally biased toward polar residues; sequence TPNSVDDNSM.

This is an uncharacterized protein from Caenorhabditis elegans.